The sequence spans 309 residues: Extracellular agarase (309 aa).

Residues 1–30 constitute a signal peptide (tat-type signal); the sequence is MVNRRDLIKWSAVALGAGAGLAGPAPAAHA. Positions 33–309 constitute a GH16 domain; that stretch reads LEWEQYPVPA…YRWVRTYQAV (277 aa). Catalysis depends on Glu-155, which acts as the Nucleophile. Glu-160 serves as the catalytic Proton donor.

Belongs to the glycosyl hydrolase 16 family. In terms of processing, predicted to be exported by the Tat system. The position of the signal peptide cleavage has been experimentally proven.

The protein localises to the secreted. The enzyme catalyses Hydrolysis of (1-&gt;4)-beta-D-galactosidic linkages in agarose, giving the tetramer as the predominant product.. The sequence is that of Extracellular agarase (dagA) from Streptomyces coelicolor (strain ATCC BAA-471 / A3(2) / M145).